Consider the following 339-residue polypeptide: Endo-beta-N-acetylglucosaminidase F1 (339 aa).

Positions 1–50 (MKKFINQFSASLKNNILVFLAFPFVWTSCARDNPLSSENSNISPNAAARA) form a signal peptide, or 51, or 52. The region spanning 60-326 (IKLFSFTEVN…KLIAKELYGD (267 aa)) is the GH18 domain. Glutamate 182 (proton donor) is an active-site residue. A propeptide (removed in mature form) is located at residue tryptophan 339.

It belongs to the glycosyl hydrolase 18 family. Monomer.

Its subcellular location is the secreted. The enzyme catalyses an N(4)-(oligosaccharide-(1-&gt;3)-[oligosaccharide-(1-&gt;6)]-beta-D-Man-(1-&gt;4)-beta-D-GlcNAc-(1-&gt;4)-alpha-D-GlcNAc)-L-asparaginyl-[protein] + H2O = an oligosaccharide-(1-&gt;3)-[oligosaccharide-(1-&gt;6)]-beta-D-Man-(1-&gt;4)-D-GlcNAc + N(4)-(N-acetyl-beta-D-glucosaminyl)-L-asparaginyl-[protein]. Functionally, endohydrolysis of the di-N-acetylchitobiosyl unit in high-mannose glycopeptides and glycoproteins. Does not hydrolyze complex bi- or triantennary glycans. The presence of a core-bound fucose impedes endo F1 hydrolysis. The protein is Endo-beta-N-acetylglucosaminidase F1 (endOF1) of Elizabethkingia meningoseptica (Chryseobacterium meningosepticum).